We begin with the raw amino-acid sequence, 92 residues long: Signal peptidase complex subunit 1 (92 aa).

Residues 1-12 are Cytoplasmic-facing; that stretch reads MDWQGQKLVEQL. A helical transmembrane segment spans residues 13–30; that stretch reads MQILLVISGVVAVVVGYT. Residues 31–36 lie on the Lumenal side of the membrane; the sequence is TESFRT. A helical membrane pass occupies residues 37 to 59; it reads MMLIYAGGVVLTTLVTVPNWPFY. Residues 60–92 lie on the Cytoplasmic side of the membrane; the sequence is NLHPLKWLDPSEAEKHPKPEVVSVASKKKFSKK. The segment at 73 to 92 is disordered; it reads EKHPKPEVVSVASKKKFSKK.

It belongs to the SPCS1 family. Component of the signal peptidase complex (SPC) composed of a catalytic subunit SEC11 and three accessory subunits SPCS1, SPCS2 and SPCS3. The complex induces a local thinning of the ER membrane which is used to measure the length of the signal peptide (SP) h-region of protein substrates. This ensures the selectivity of the complex towards h-regions shorter than 18-20 amino acids.

The protein localises to the endoplasmic reticulum membrane. Functionally, component of the signal peptidase complex (SPC) which catalyzes the cleavage of N-terminal signal sequences from nascent proteins as they are translocated into the lumen of the endoplasmic reticulum. Dispensable for SPC enzymatic activity. The chain is Signal peptidase complex subunit 1 from Arabidopsis thaliana (Mouse-ear cress).